The sequence spans 284 residues: TnP I resolvase (284 aa).

One can recognise a Core-binding (CB) domain in the interval 1 to 84 (MDVAKQFSSY…SLAKFNEFLI (84 aa)). A Tyr recombinase domain is found at 107–282 (ASPTQIVELD…NQLQLKNKME (176 aa)). Residues arginine 145, lysine 170, histidine 234, arginine 237, and histidine 260 contribute to the active site. Tyrosine 269 serves as the catalytic O-(3'-phospho-DNA)-tyrosine intermediate.

The protein belongs to the 'phage' integrase family.

Resolvase catalyzes the resolution (a site-specific recombination) of the cointegrated replicon to yield the final transposition products. The sequence is that of TnP I resolvase (tnpI) from Bacillus thuringiensis.